We begin with the raw amino-acid sequence, 143 residues long: AP-2 complex subunit sigma (143 aa).

The protein belongs to the adaptor complexes small subunit family. Adaptor protein complex 2 (AP-2) is a heterotetramer composed of two large adaptins (alpha-type subunit apl3 and beta-type subunit apl1), a medium chain (mu-type subunit apm4) and a small adaptin (sigma-type subunit aps2).

The protein resides in the cell membrane. It localises to the membrane. It is found in the coated pit. In terms of biological role, component of the adaptor complexes which link clathrin to receptors in coated vesicles. Clathrin-associated protein complexes are believed to interact with the cytoplasmic tails of membrane proteins, leading to their selection and concentration. The chain is AP-2 complex subunit sigma (aps2) from Schizosaccharomyces pombe (strain 972 / ATCC 24843) (Fission yeast).